A 142-amino-acid chain; its full sequence is Large ribosomal subunit protein uL13 (142 aa).

It belongs to the universal ribosomal protein uL13 family. In terms of assembly, part of the 50S ribosomal subunit.

Functionally, this protein is one of the early assembly proteins of the 50S ribosomal subunit, although it is not seen to bind rRNA by itself. It is important during the early stages of 50S assembly. The chain is Large ribosomal subunit protein uL13 from Buchnera aphidicola subsp. Cinara cedri (strain Cc).